The chain runs to 144 residues: Large ribosomal subunit protein uL16 (144 aa).

A compositionally biased stretch (basic residues) spans 1-16; it reads MLIPKRVKYRKQHRPR. The disordered stretch occupies residues 1-25; it reads MLIPKRVKYRKQHRPRGNGGVSKGG.

Belongs to the universal ribosomal protein uL16 family. In terms of assembly, part of the 50S ribosomal subunit.

In terms of biological role, binds 23S rRNA and is also seen to make contacts with the A and possibly P site tRNAs. This Desulforamulus reducens (strain ATCC BAA-1160 / DSM 100696 / MI-1) (Desulfotomaculum reducens) protein is Large ribosomal subunit protein uL16.